The following is a 102-amino-acid chain: Small ribosomal subunit protein uS10 (102 aa).

This sequence belongs to the universal ribosomal protein uS10 family. As to quaternary structure, part of the 30S ribosomal subunit.

Functionally, involved in the binding of tRNA to the ribosomes. This Thermosipho melanesiensis (strain DSM 12029 / CIP 104789 / BI429) protein is Small ribosomal subunit protein uS10.